The sequence spans 1108 residues: Retinal guanylyl cyclase 1 (1108 aa).

The N-terminal stretch at 1-54 (MSAWLLPAGGFPGAGFCIPAWQSRSSLSRVLRWPGPGLPGLLLLLLLPSPSAFS) is a signal peptide. Topologically, residues 55–465 (AVFKVGVLGP…PDVICNGGVE (411 aa)) are extracellular. The cysteines at positions 108 and 136 are disulfide-linked. N-linked (GlcNAc...) asparagine glycosylation is present at asparagine 300. Residues 466-490 (PGLVFVGFLLVIVVGLTGAFLAHYL) form a helical membrane-spanning segment. Topologically, residues 491–1108 (RHRLLHMQMV…KARPGQFTGK (618 aa)) are cytoplasmic. The segment at 520-552 (GGSSRKVAQGSRSSLATRSTSDIRSVPSQPQES) is disordered. The 292-residue stretch at 520–811 (GGSSRKVAQG…DLTFDLFKGI (292 aa)) folds into the Protein kinase domain. The span at 529 to 552 (GSRSSLATRSTSDIRSVPSQPQES) shows a compositional bias: polar residues. The region spanning 883-1013 (TLYFSDIVGF…DTVNTASRME (131 aa)) is the Guanylate cyclase domain. A disordered region spans residues 1069–1108 (IPKPPDLQPGASNHGISLQEIPPERRKKLEKARPGQFTGK).

It belongs to the adenylyl cyclase class-4/guanylyl cyclase family. As to quaternary structure, homodimer; requires homodimerization for guanylyl cyclase activity. Interacts (via C-terminus) with RD3 (via C-terminus); promotes the exit of GUCY2E from the endoplasmic reticulum and its trafficking to the photoreceptor outer segments. Interaction with RD3 negatively regulates GUCY2E guanylate cyclase activity. There are 9 conserved cysteine residues in sensory guanylate cyclases, 6 in the extracellular domain, which may be involved in intra- or interchain disulfide bonds. As to expression, expressed in retina and enriched in photoreceptor outer segments.

Its subcellular location is the membrane. The protein resides in the photoreceptor outer segment membrane. It is found in the endoplasmic reticulum membrane. It carries out the reaction GTP = 3',5'-cyclic GMP + diphosphate. Activated by GUCA1A when free calcium ions concentration is low, and inhibited by GUCA1A when free calcium ions concentration is high. Negatively regulated by RD3; inhibits the basal and GUCA1A-stimulated guanylate cyclase activity. Catalyzes the synthesis of cyclic GMP (cGMP) in rods and cones of photoreceptors. Plays an essential role in phototransduction, by mediating cGMP replenishment. May also participate in the trafficking of membrane-asociated proteins to the photoreceptor outer segment membrane. This is Retinal guanylyl cyclase 1 (Gucy2e) from Rattus norvegicus (Rat).